A 94-amino-acid polypeptide reads, in one-letter code: Small ribosomal subunit protein uS19 (94 aa).

This sequence belongs to the universal ribosomal protein uS19 family.

Its function is as follows. Protein S19 forms a complex with S13 that binds strongly to the 16S ribosomal RNA. This is Small ribosomal subunit protein uS19 from Nitrosomonas eutropha (strain DSM 101675 / C91 / Nm57).